The primary structure comprises 357 residues: Anthranilate phosphoribosyltransferase (357 aa).

5-phospho-alpha-D-ribose 1-diphosphate is bound by residues Gly94, Gly97–Asp98, Thr102, Asn104–Thr107, Lys122–Ser130, and Gly134. Gly94 lines the anthranilate pocket. A Mg(2+)-binding site is contributed by Ser106. Asn125 provides a ligand contact to anthranilate. An anthranilate-binding site is contributed by Arg180. Asp238 and Glu239 together coordinate Mg(2+).

Belongs to the anthranilate phosphoribosyltransferase family. In terms of assembly, homodimer. Requires Mg(2+) as cofactor.

It carries out the reaction N-(5-phospho-beta-D-ribosyl)anthranilate + diphosphate = 5-phospho-alpha-D-ribose 1-diphosphate + anthranilate. Its pathway is amino-acid biosynthesis; L-tryptophan biosynthesis; L-tryptophan from chorismate: step 2/5. Functionally, catalyzes the transfer of the phosphoribosyl group of 5-phosphorylribose-1-pyrophosphate (PRPP) to anthranilate to yield N-(5'-phosphoribosyl)-anthranilate (PRA). The chain is Anthranilate phosphoribosyltransferase from Mycobacterium sp. (strain KMS).